A 340-amino-acid chain; its full sequence is Protein LSM14 homolog car-1 (340 aa).

Positions 1–81 (MSNQTPYIGS…IKDLIVCDTP (81 aa)) constitute a Sm domain. Positions 101–125 (SRSAPASDGAPAASAGSSRAGTPSR) are enriched in low complexity. The segment at 101-148 (SRSAPASDGAPAASAGSSRAGTPSRNSPLGQIIQNQRPGRGGYQQNFQ) is disordered. Polar residues predominate over residues 126-148 (NSPLGQIIQNQRPGRGGYQQNFQ). The region spanning 178–214 (VNHREKLKFESDFDFEKANEKFQEVLVDNLEKLNIED) is the DFDF domain. Positions 227–243 (AFYDKKTSFFDNISCES) match the FFD box motif. Positions 251–271 (TGRPDWKKERETNQETFGHNA) match the TFG box motif. A disordered region spans residues 277–340 (YRRGFGGRGR…QGNTAAAAEQ (64 aa)). Gly residues predominate over residues 280–296 (GFGGRGRGGNRGYGGYN). Residues 312 to 325 (GYRQNNGGYRRGGY) show a composition bias toward low complexity.

It belongs to the LSM14 family.

It is found in the nucleus. Transcriptional regulator. Involved in modulating embryonic expression of ATP-dependent chaperone cdc-48.1. May play a role in mRNA gene silencing, and RNA granule (P-body) assembly. The chain is Protein LSM14 homolog car-1 from Caenorhabditis elegans.